We begin with the raw amino-acid sequence, 106 residues long: Guanyl-specific ribonuclease Th1 (106 aa).

Disulfide bonds link cysteine 5–cysteine 103 and cysteine 23–cysteine 84. The active site involves histidine 39. The active-site Proton acceptor is glutamate 58. The active-site Proton donor is the histidine 92.

This sequence belongs to the ribonuclease N1/T1 family.

It carries out the reaction [RNA] containing guanosine + H2O = an [RNA fragment]-3'-guanosine-3'-phosphate + a 5'-hydroxy-ribonucleotide-3'-[RNA fragment].. The polypeptide is Guanyl-specific ribonuclease Th1 (Trichoderma harzianum (Hypocrea lixii)).